We begin with the raw amino-acid sequence, 1603 residues long: GATOR1 complex protein DEPDC5 (1603 aa).

3 disordered regions span residues 427–450, 484–527, and 696–720; these read GKKP…KESE, VRER…SSLG, and LSNS…VSTS. Over residues 430 to 439 the composition is skewed to basic and acidic residues; the sequence is PASEKAKNGR. Residues 494–508 show a composition bias toward low complexity; it reads SASSCDVSSSPSLPS. Ser-505 carries the phosphoserine modification. Polar residues-rich tracts occupy residues 518-527 and 696-707; these read SQASDDSSLG and LSNSGAGMNPRT. At Ser-1002 the chain carries Phosphoserine; by PIM1. Over residues 1135 to 1153 the composition is skewed to polar residues; it reads DRGNSQTFGNSQNIGEQGY. The tract at residues 1135–1165 is disordered; the sequence is DRGNSQTFGNSQNIGEQGYSSTNSSDSSSQQ. The segment covering 1154–1165 has biased composition (low complexity); that stretch reads SSTNSSDSSSQQ. The region spanning 1187 to 1262 is the DEP domain; that stretch reads PSTGVQLLSE…YGFYFYKIVT (76 aa). A Phosphoserine; by PKB/AKT1 and PIM1 modification is found at Ser-1530.

The protein belongs to the IML1 family. As to quaternary structure, within the GATOR complex, component of the GATOR1 subcomplex, made of DEPDC5, NPRL2 and NPRL3. GATOR1 mediates the strong interaction of the GATOR complex with small GTPases Rag (RagA/RRAGA, RagB/RRAGB, RagC/RRAGC and/or RagD/RRAGD) heterodimers. Interacts with SAMTOR; interaction is direct and takes place in presence of methionine, leading to inhibit the activity of the GATOR1 complex. Post-translationally, phosphorylation at Ser-1002 and Ser-1530 by AKT1 and PIM1 inhibit the activity of DEPDC5, releasing inhibition of the mTORC1 pathway. In terms of processing, ubiquitinated. Amino acid-induced 'Lys-48'-linked polyubiquitination of DEPDC5 by the BCR(KLHL22) ubiquitin ligase complex leads to DEPDC5 proteasomal degradation and inhibition of the GATOR1 complex. Ubiquitination may occur at multiple lysines. In terms of tissue distribution, expressed in developing and adult brain.

It localises to the lysosome membrane. Its subcellular location is the cytoplasm. The protein localises to the cytosol. The protein resides in the perinuclear region. Its function is as follows. As a component of the GATOR1 complex functions as an inhibitor of the amino acid-sensing branch of the mTORC1 pathway. In response to amino acid depletion, the GATOR1 complex has GTPase activating protein (GAP) activity and strongly increases GTP hydrolysis by RagA/RRAGA (or RagB/RRAGB) within heterodimeric Rag complexes, thereby turning them into their inactive GDP-bound form, releasing mTORC1 from lysosomal surface and inhibiting mTORC1 signaling. In the presence of abundant amino acids, the GATOR1 complex is negatively regulated by GATOR2, the other GATOR subcomplex, in this amino acid-sensing branch of the TORC1 pathway. Within the GATOR1 complex, DEPDC5 mediates direct interaction with the nucleotide-binding pocket of small GTPases Rag (RagA/RRAGA, RagB/RRAGB, RagC/RRAGC and/or RagD/RRAGD) and coordinates their nucleotide loading states by promoting RagA/RRAGA or RagB/RRAGB into their GDP-binding state and RagC/RRAGC or RagD/RRAGD into their GTP-binding state. However, it does not execute the GAP activity, which is mediated by NPRL2. The chain is GATOR1 complex protein DEPDC5 from Homo sapiens (Human).